We begin with the raw amino-acid sequence, 279 residues long: Indole-3-glycerol phosphate synthase (279 aa).

The protein belongs to the TrpC family.

The catalysed reaction is 1-(2-carboxyphenylamino)-1-deoxy-D-ribulose 5-phosphate + H(+) = (1S,2R)-1-C-(indol-3-yl)glycerol 3-phosphate + CO2 + H2O. It functions in the pathway amino-acid biosynthesis; L-tryptophan biosynthesis; L-tryptophan from chorismate: step 4/5. The chain is Indole-3-glycerol phosphate synthase from Ectopseudomonas mendocina (strain ymp) (Pseudomonas mendocina).